A 224-amino-acid chain; its full sequence is Twisted gastrulation protein homolog 1 (224 aa).

The signal sequence occupies residues 1-26 (MRSPCAALSASLLLLLLLLWARSSVG). Asparagine 53, asparagine 82, and asparagine 148 each carry an N-linked (GlcNAc...) asparagine glycan.

Belongs to the twisted gastrulation protein family. As to quaternary structure, interacts with CHRD and BMP4. This interaction enhances CHRD/BMP4 complex formation. Interacts with BMP7.

The protein resides in the secreted. May be involved in dorsoventral axis formation. Seems to antagonize BMP signaling by forming ternary complexes with CHRD and BMPs, thereby preventing BMPs from binding to their receptors. In addition to the anti-BMP function, also has pro-BMP activity, partly mediated by cleavage and degradation of CHRD, which releases BMPs from ternary complexes. May be an important modulator of BMP-regulated cartilage development and chondrocyte differentiation. May play a role in thymocyte development. This is Twisted gastrulation protein homolog 1 (TWSG1) from Gallus gallus (Chicken).